Consider the following 202-residue polypeptide: Dephospho-CoA kinase (202 aa).

The DPCK domain occupies 6 to 202 (KVSITGDLSS…EYFYALKGAL (197 aa)). Residue 14–19 (SSGKTE) coordinates ATP.

Belongs to the CoaE family.

The protein resides in the cytoplasm. It carries out the reaction 3'-dephospho-CoA + ATP = ADP + CoA + H(+). It participates in cofactor biosynthesis; coenzyme A biosynthesis; CoA from (R)-pantothenate: step 5/5. Catalyzes the phosphorylation of the 3'-hydroxyl group of dephosphocoenzyme A to form coenzyme A. In Chlamydia abortus (strain DSM 27085 / S26/3) (Chlamydophila abortus), this protein is Dephospho-CoA kinase.